The sequence spans 519 residues: Exodeoxyribonuclease 7 large subunit (519 aa).

Positions 493–519 (AISTGKSSNTNRKSAPAREPGKQGSLF) are disordered. Residues 496–505 (TGKSSNTNRK) are compositionally biased toward polar residues.

It belongs to the XseA family. As to quaternary structure, heterooligomer composed of large and small subunits.

The protein resides in the cytoplasm. The catalysed reaction is Exonucleolytic cleavage in either 5'- to 3'- or 3'- to 5'-direction to yield nucleoside 5'-phosphates.. Bidirectionally degrades single-stranded DNA into large acid-insoluble oligonucleotides, which are then degraded further into small acid-soluble oligonucleotides. This Chelativorans sp. (strain BNC1) protein is Exodeoxyribonuclease 7 large subunit.